We begin with the raw amino-acid sequence, 101 residues long: uncharacterized protein (101 aa).

Positions 1-24 are cleaved as a signal peptide; it reads MILMFRMNKGMSFITLLFSLALFS.

This is an uncharacterized protein from Haemophilus influenzae (strain ATCC 51907 / DSM 11121 / KW20 / Rd).